A 601-amino-acid polypeptide reads, in one-letter code: Adenine deaminase (601 aa).

Belongs to the metallo-dependent hydrolases superfamily. Adenine deaminase family. Mn(2+) serves as cofactor.

It carries out the reaction adenine + H2O + H(+) = hypoxanthine + NH4(+). This is Adenine deaminase from Ruegeria sp. (strain TM1040) (Silicibacter sp.).